The sequence spans 423 residues: Histidine--tRNA ligase 2 (423 aa).

This sequence belongs to the class-II aminoacyl-tRNA synthetase family. As to quaternary structure, homodimer.

It localises to the cytoplasm. The enzyme catalyses tRNA(His) + L-histidine + ATP = L-histidyl-tRNA(His) + AMP + diphosphate + H(+). This is Histidine--tRNA ligase 2 from Bacillus cereus (strain ATCC 14579 / DSM 31 / CCUG 7414 / JCM 2152 / NBRC 15305 / NCIMB 9373 / NCTC 2599 / NRRL B-3711).